We begin with the raw amino-acid sequence, 177 residues long: Large ribosomal subunit protein uL5 (177 aa).

Belongs to the universal ribosomal protein uL5 family. Part of the 50S ribosomal subunit; contacts the 5S rRNA and probably tRNA. Forms a bridge to the 30S subunit in the 70S ribosome.

Its function is as follows. This is one of the proteins that bind and probably mediate the attachment of the 5S RNA into the large ribosomal subunit, where it forms part of the central protuberance. In the 70S ribosome it contacts protein S13 of the 30S subunit (bridge B1b), connecting the 2 subunits; this bridge is implicated in subunit movement. May contact the P site tRNA; the 5S rRNA and some of its associated proteins might help stabilize positioning of ribosome-bound tRNAs. The chain is Large ribosomal subunit protein uL5 from Sulfurisphaera tokodaii (strain DSM 16993 / JCM 10545 / NBRC 100140 / 7) (Sulfolobus tokodaii).